A 505-amino-acid chain; its full sequence is Glycerol kinase (505 aa).

Threonine 15 contributes to the ADP binding site. Threonine 15, threonine 16, and serine 17 together coordinate ATP. Position 15 (threonine 15) interacts with sn-glycerol 3-phosphate. An ADP-binding site is contributed by arginine 19. Residues arginine 85, glutamate 86, tyrosine 136, and aspartate 249 each coordinate sn-glycerol 3-phosphate. 5 residues coordinate glycerol: arginine 85, glutamate 86, tyrosine 136, aspartate 249, and glutamine 250. ADP is bound by residues threonine 271 and glycine 314. ATP is bound by residues threonine 271, glycine 314, glutamine 318, and glycine 415. ADP is bound by residues glycine 415 and asparagine 419.

This sequence belongs to the FGGY kinase family.

The catalysed reaction is glycerol + ATP = sn-glycerol 3-phosphate + ADP + H(+). The protein operates within polyol metabolism; glycerol degradation via glycerol kinase pathway; sn-glycerol 3-phosphate from glycerol: step 1/1. With respect to regulation, inhibited by fructose 1,6-bisphosphate (FBP). Key enzyme in the regulation of glycerol uptake and metabolism. Catalyzes the phosphorylation of glycerol to yield sn-glycerol 3-phosphate. The chain is Glycerol kinase from Mycoplasma capricolum subsp. capricolum (strain California kid / ATCC 27343 / NCTC 10154).